The sequence spans 248 residues: Serine/arginine-rich splicing factor 1 (248 aa).

Ser2 is subject to N-acetylserine. Ser2 is modified (phosphoserine). The RRM 1 domain occupies 16 to 91 (CRIYVGNLPP…YRLRVEFPRS (76 aa)). Residue Lys30 forms a Glycyl lysine isopeptide (Lys-Gly) (interchain with G-Cter in SUMO2) linkage. An N6-acetyllysine; alternate modification is found at Lys38. Residue Lys38 forms a Glycyl lysine isopeptide (Lys-Gly) (interchain with G-Cter in SUMO2); alternate linkage. The tract at residues 88–134 (FPRSGRGTGRGGGGGGGGGAPRGRYGPPSRRSENRVVVSGLPPSGSW) is disordered. Asymmetric dimethylarginine; alternate is present on residues Arg93, Arg97, and Arg109. Omega-N-methylarginine; alternate occurs at positions 93, 97, and 109. Over residues 93 to 108 (RGTGRGGGGGGGGGAP) the composition is skewed to gly residues. At Arg111 the chain carries Omega-N-methylarginine. An RRM 2 domain is found at 121-195 (NRVVVSGLPP…ETAYIRVKVD (75 aa)). A Phosphoserine modification is found at Ser133. N6-acetyllysine is present on Lys179. The disordered stretch occupies residues 191–248 (RVKVDGPRSPSYGRSRSRSRSRSRNRSRSNSRSRSYSPRRSRGSPRYSPRHSRSRSRT). The segment at 198–247 (RSPSYGRSRSRSRSRSRNRSRSNSRSRSYSPRRSRGSPRYSPRHSRSRSR) is interaction with SAFB1. A phosphoserine mark is found at Ser199 and Ser201. The residue at position 202 (Tyr202) is a Phosphotyrosine. 6 positions are modified to phosphoserine: Ser205, Ser207, Ser209, Ser231, Ser234, and Ser238. Residues 205–248 (SRSRSRSRSRNRSRSNSRSRSYSPRRSRGSPRYSPRHSRSRSRT) show a composition bias toward basic residues.

This sequence belongs to the splicing factor SR family. As to quaternary structure, consists of two polypeptides of p32 and p33. Identified in the spliceosome C complex. Component of a ribonucleoprotein complex containing mRNAs and RNA-binding proteins including DDX5, HNRNPH2 and SRSF1 as well as splicing regulator ARVCF. In vitro, self-associates and binds SRSF2, SNRNP70 and U2AF1 but not U2AF2. Binds SREK1/SFRS12. Interacts with SAFB/SAFB1. Interacts with PSIP1/LEDGF. Interacts with RSRC1 (via Arg/Ser-rich domain). Interacts with ZRSR2/U2AF1-RS2. Interacts with CCDC55 (via C-terminus). Interacts with SRPK1 and a sliding docking interaction is essential for its sequential and processive phosphorylation by SRPK1. Interacts with NXF1. Interacts with CCNL1, CCNL2 and CDK11B. Interacts with RRP1B. Interacts (when phosphorylated in its RS domain) with TNPO3; promoting nuclear import. Interacts with ILDR1 (via C-terminus) and ILDR2. In terms of processing, phosphorylated by CLK1, CLK2, CLK3 and CLK4. Phosphorylated by SRPK1 at multiple serines in its RS domain via a directional (C-terminal to N-terminal) and a dual-track mechanism incorporating both processive phosphorylation (in which the kinase stays attached to the substrate after each round of phosphorylation) and distributive phosphorylation steps (in which the kinase and substrate dissociate after each phosphorylation event). The RS domain of SRSF1 binds to a docking groove in the large lobe of the kinase domain of SRPK1 and this induces certain structural changes in SRPK1 and/or RRM 2 domain of SRSF1, allowing RRM 2 to bind the kinase and initiate phosphorylation. The cycles continue for several phosphorylation steps in a processive manner (steps 1-8) until the last few phosphorylation steps (approximately steps 9-12). During that time, a mechanical stress induces the unfolding of the beta-4 motif in RRM 2, which then docks at the docking groove of SRPK1. This also signals RRM 2 to begin to dissociate, which facilitates SRSF1 dissociation after phosphorylation is completed. Asymmetrically dimethylated at arginines, probably by PRMT1, methylation promotes localization to nuclear speckles.

The protein resides in the cytoplasm. The protein localises to the nucleus speckle. In terms of biological role, plays a role in preventing exon skipping, ensuring the accuracy of splicing and regulating alternative splicing. Interacts with other spliceosomal components, via the RS domains, to form a bridge between the 5'- and 3'-splice site binding components, U1 snRNP and U2AF. Can stimulate binding of U1 snRNP to a 5'-splice site-containing pre-mRNA. Binds to purine-rich RNA sequences, either the octamer, 5'-RGAAGAAC-3' (r=A or G) or the decamers, AGGACAGAGC/AGGACGAAGC. Binds preferentially to the 5'-CGAGGCG-3' motif in vitro. Three copies of the octamer constitute a powerful splicing enhancer in vitro, the ASF/SF2 splicing enhancer (ASE) which can specifically activate ASE-dependent splicing. May function as export adapter involved in mRNA nuclear export through the TAP/NXF1 pathway. The polypeptide is Serine/arginine-rich splicing factor 1 (SRSF1) (Pongo abelii (Sumatran orangutan)).